The sequence spans 341 residues: Biotin synthase (341 aa).

A Radical SAM core domain is found at 43–266 (SEIQLSQLLS…IAVARIVCPK (224 aa)). The [4Fe-4S] cluster site is built by Cys-58, Cys-62, and Cys-65. Positions 102, 133, 193, and 270 each coordinate [2Fe-2S] cluster.

Belongs to the radical SAM superfamily. Biotin synthase family. In terms of assembly, homodimer. [4Fe-4S] cluster serves as cofactor. The cofactor is [2Fe-2S] cluster.

It catalyses the reaction (4R,5S)-dethiobiotin + (sulfur carrier)-SH + 2 reduced [2Fe-2S]-[ferredoxin] + 2 S-adenosyl-L-methionine = (sulfur carrier)-H + biotin + 2 5'-deoxyadenosine + 2 L-methionine + 2 oxidized [2Fe-2S]-[ferredoxin]. It participates in cofactor biosynthesis; biotin biosynthesis; biotin from 7,8-diaminononanoate: step 2/2. Catalyzes the conversion of dethiobiotin (DTB) to biotin by the insertion of a sulfur atom into dethiobiotin via a radical-based mechanism. This chain is Biotin synthase, found in Caulobacter vibrioides (strain ATCC 19089 / CIP 103742 / CB 15) (Caulobacter crescentus).